Here is a 426-residue protein sequence, read N- to C-terminus: MKFTELKIIEQGQGKWTVTIDGTEWTETLKKAKNRVLANLEVPGFRKGKIPAAQAEKYVTPSKIYNEAYRMMVSPAFDFARAQEVKVEPMNSPEPIPAKVSEKELVIEFLFDLKPEIKLGDYKNIKTVKKETVEVTKEEIEAVIDQYCEQFIMEKPKAADAKIEKGDIVTFDFKGFMNGEAFKGGEAKGHKLVIGSNQFIPGFEDSMIGLGLGEAKIDVTFPEGYTPELANKPATFELNIIEVKARELPKKDDELVKDLNLPNVETFAQFEAKVKEDITKQKLQNVKNQFVNDLINEIIKNSTIELPKTAIENQTADLRKEFEAQLKQQGLDIKKYKKVTGLSDEAIKAELTADAKNKLETYLVTSEIRSKEKFEVTEEAINAKFENLAAQFGIPADQIKTMVNPEMLKSEIVNDLLVDFLYSNNG.

The 84-residue stretch at 166–249 folds into the PPIase FKBP-type domain; sequence GDIVTFDFKG…IIEVKARELP (84 aa).

This sequence belongs to the FKBP-type PPIase family. Tig subfamily.

It is found in the cytoplasm. The enzyme catalyses [protein]-peptidylproline (omega=180) = [protein]-peptidylproline (omega=0). Functionally, involved in protein export. Acts as a chaperone by maintaining the newly synthesized protein in an open conformation. Functions as a peptidyl-prolyl cis-trans isomerase. The chain is Trigger factor from Mesoplasma florum (strain ATCC 33453 / NBRC 100688 / NCTC 11704 / L1) (Acholeplasma florum).